A 50-amino-acid chain; its full sequence is Small nuclear ribonucleoprotein Sm D2 (50 aa).

A disordered region spans residues methionine 1–residue 36. N-acetylserine is present on serine 2. Residues lysine 6 and lysine 8 each participate in a glycyl lysine isopeptide (Lys-Gly) (interchain with G-Cter in SUMO2) cross-link. Over residues proline 7–glutamate 21 the composition is skewed to basic and acidic residues. Serine 9 is modified (phosphoserine). Threonine 12 is modified (phosphothreonine).

Belongs to the snRNP core protein family. Core component of the spliceosomal U1, U2, U4 and U5 small nuclear ribonucleoproteins (snRNPs), the building blocks of the spliceosome. Most spliceosomal snRNPs contain a common set of Sm proteins, SNRPB, SNRPD1, SNRPD2, SNRPD3, SNRPE, SNRPF and SNRPG that assemble in a heptameric protein ring on the Sm site of the small nuclear RNA to form the core snRNP. Component of the U1 snRNP. The U1 snRNP is composed of the U1 snRNA and the 7 core Sm proteins SNRPB, SNRPD1, SNRPD2, SNRPD3, SNRPE, SNRPF and SNRPG, and at least three U1 snRNP-specific proteins SNRNP70/U1-70K, SNRPA/U1-A and SNRPC/U1-C. Component of the U4/U6-U5 tri-snRNP complex composed of the U4, U6 and U5 snRNAs and at least PRPF3, PRPF4, PRPF6, PRPF8, PRPF31, SNRNP200, TXNL4A, SNRNP40, SNRPB, SNRPD1, SNRPD2, SNRPD3, SNRPE, SNRPF, SNRPG, DDX23, CD2BP2, PPIH, SNU13, EFTUD2, SART1 and USP39, plus LSM2, LSM3, LSM4, LSM5, LSM6, LSM7 and LSM8. Component of the minor spliceosome, which splices U12-type introns. Part of the SMN-Sm complex that contains SMN1, GEMIN2/SIP1, DDX20/GEMIN3, GEMIN4, GEMIN5, GEMIN6, GEMIN7, GEMIN8, STRAP/UNRIP and the Sm proteins SNRPB, SNRPD1, SNRPD2, SNRPD3, SNRPE, SNRPF and SNRPG; catalyzes core snRNPs assembly. Forms a 6S pICln-Sm complex composed of CLNS1A/pICln, SNRPD1, SNRPD2, SNRPE, SNRPF and SNRPG; ring-like structure where CLNS1A/pICln mimics additional Sm proteins and which is unable to assemble into the core snRNP. Interacts with SMN1; the interaction is direct. Interacts with GEMIN2; the interaction is direct. Interacts with SNRPD1; the interaction is direct. Interacts with SNRPF; the interaction is direct.

Its subcellular location is the cytoplasm. The protein localises to the cytosol. It localises to the nucleus. Functionally, plays a role in pre-mRNA splicing as a core component of the spliceosomal U1, U2, U4 and U5 small nuclear ribonucleoproteins (snRNPs), the building blocks of the spliceosome. Component of both the pre-catalytic spliceosome B complex and activated spliceosome C complexes. As a component of the minor spliceosome, involved in the splicing of U12-type introns in pre-mRNAs. This is Small nuclear ribonucleoprotein Sm D2 (SNRPD2) from Sus scrofa (Pig).